A 283-amino-acid polypeptide reads, in one-letter code: Large ribosomal subunit protein uL2 (283 aa).

2 disordered regions span residues 37–59 and 219–283; these read AKKK…RGGG and HKGI…RNSK. Basic residues predominate over residues 256–269; it reads WGKRHMGVKTRNNK.

Belongs to the universal ribosomal protein uL2 family. In terms of assembly, part of the 50S ribosomal subunit. Forms a bridge to the 30S subunit in the 70S ribosome.

Its function is as follows. One of the primary rRNA binding proteins. Required for association of the 30S and 50S subunits to form the 70S ribosome, for tRNA binding and peptide bond formation. It has been suggested to have peptidyltransferase activity; this is somewhat controversial. Makes several contacts with the 16S rRNA in the 70S ribosome. In Mycoplasmoides gallisepticum (strain R(low / passage 15 / clone 2)) (Mycoplasma gallisepticum), this protein is Large ribosomal subunit protein uL2.